The chain runs to 126 residues: MALWKRLTNRTNRSQGACFEQKARLFLEQQGLKFIQANQHFKCGELDLVMQQGDTIVFVEVRQRKNNRFGSALESIDYRKQQKWLDAANMWLLTEYNQSLDTANCRFDVVAFEAEQPPLWIQNFLG.

This sequence belongs to the UPF0102 family.

The sequence is that of UPF0102 protein HD_0802 from Haemophilus ducreyi (strain 35000HP / ATCC 700724).